Consider the following 313-residue polypeptide: DDRGK domain-containing protein 1 (313 aa).

A helical transmembrane segment spans residues 1–28; that stretch reads MVSPVVYLVVAALLVGLILFLTRGRGRA. Positions 1–113 are mediates interaction with CDK5RAP3; the sequence is MVSPVVYLVV…IEKPVETHLS (113 aa). The Cytoplasmic portion of the chain corresponds to 29-313; sequence AAAAQEPLHN…GRETPAQAPA (285 aa). The interval 40 to 88 is disordered; it reads EVPAAAGRVARPQPLEPEEQRAAGRPRRRRDLGSRLQAQRRAQRVAWAD. Phosphoserine occurs at positions 73 and 113. Residues 73–87 are compositionally biased toward low complexity; the sequence is SRLQAQRRAQRVAWA. The tract at residues 117–215 is mediates interaction with TRIP4; sequence GAKKLRKLEE…MTEEQSHSFL (99 aa). Residues 130–185 form a disordered region; sequence RKAQREAEEAEREERKRLESQREAEWKKEEERLRLEEEQKEEEERKAQEEQAQREH. The UFM1-interacting motif (UFIM) signature appears at 194 to 208; it reads TFVVVEEGVGETMTE. Positions 215–313 are mediates interaction with UFL1; it reads LAEFINYIKQ…GRETPAQAPA (99 aa). The PCI domain maps to 228 to 272; it reads VLLEDLASQVGLRTQDTINRIQDLLAEGTLTGVIDDRGKFIYITP. Lys-266 is covalently cross-linked (Glycyl lysine isopeptide (Lys-Gly) (interchain with G-Cter in UFM1)).

It belongs to the DDRGK1 family. In terms of assembly, component of the UFM1 ribosome E3 ligase (UREL) complex, composed of UFL1, DDRGK1 and CDK5RAP3. Interacts with (unphosphorylated) ERN1/IRE1-alpha; interaction is dependent on UFM1 and takes place in response to endoplasmic reticulum stress, regulating ERN1/IRE1-alpha stability. Interacts with NFKBIA. Interacts with SOX9. In terms of processing, ubiquitinated. Ubiquitination probably triggers proteasomal degradation and is negatively regulated by UFL1, the enzyme involved in the ufmylation of DDRGK1. Post-translationally, ufmylated; conjugated to ubiquitin-like protein UFM1, probably at Lys-266 by UFL1. The relevance of ufmylation is however unclear: as DDRGK1 acts as a substrate adapter for ufmylation, it is uncertain whether ufmylation is a collateral effect of the ufmylation process or whether it is required to regulate its activity.

The protein resides in the endoplasmic reticulum membrane. Its function is as follows. Component of the UFM1 ribosome E3 ligase (UREL) complex, a multiprotein complex that catalyzes ufmylation of endoplasmic reticulum-docked proteins. The UREL complex plays a key role in ribosome recycling by mediating mono-ufmylation of the RPL26/uL24 subunit of the 60S ribosome following ribosome dissociation: ufmylation weakens the junction between post-termination 60S subunits and SEC61 translocons, promoting release and recycling of the large ribosomal subunit from the endoplasmic reticulum membrane. Ufmylation of RPL26/uL24 and subsequent 60S ribosome recycling either take place after normal termination of translation or after ribosome stalling during cotranslational translocation at the endoplasmic reticulum. Within the UREL complex, DDRGK1 tethers the complex to the endoplasmic reticulum membrane to restrict its activity to endoplasmic reticulum-docked ribosomes and acts as an ufmylation 'reader': following RPL26/uL24 ufmylation, DDRGK1 specifically binds to ufmylated RPL26/uL24 via its UFIM motif, resulting in stable association between the 60S ribosome and the UREL complex, followed by dissociation of the 60S ribosome subunit from the endoplasmic reticulum membrane. The UREL complex is also involved in reticulophagy in response to endoplasmic reticulum stress by promoting ufmylation of proteins such as CYB5R3 and RPN1, thereby promoting lysosomal degradation of ufmylated proteins. Ufmylation-dependent reticulophagy inhibits the unfolded protein response (UPR) by regulating ERN1/IRE1-alpha stability. Acts as a regulator of immunity by promoting differentiation of B-cells into plasma cells: acts by promoting expansion of the endoplasmic reticulum and regulating the unfolded protein response (UPR). May also be required for TRIP4 ufmylation. May play a role in NF-kappa-B-mediated transcription through regulation of the phosphorylation and the degradation of NFKBIA, the inhibitor of NF-kappa-B. Plays a role in cartilage development through SOX9, inhibiting the ubiquitin-mediated proteasomal degradation of this transcriptional regulator. Required for stabilization and ufmylation of ATG9A. This Bos taurus (Bovine) protein is DDRGK domain-containing protein 1.